The chain runs to 464 residues: MSNLFQRDDDIVALATPFLSSALCVIRSSGASSIPKFSKIFSNHSALNSAPGNTIHYGYILDNENNCKVDEVVVCLYRAPKSFTGQDSIEVIAHGSVIGIKKIIDLFLKSGFRMAEPGEFTLRSFLAKKIALTKAEALHEIIFATTNKTYSLAVTPLSGALFANLDAIQRCLLNILSAVSAYLDYEVDDHEISIPFDLILNSKAELKKLINSYKVYEKIDHGVTLVLAGSVNAGKSSLFNMFLKKDRSIVSSYPGTTRDYIEATFELDGILFNLFDTAGLKDADNFVERLGIEKSNSLIKEASLVIYVIDVSSNLPREDFLFIDSNKSNSKILFVLNKIDLNINKSTEEFVRSSVLNSSNLIMISTKNLEGIDILYDKIKTLISYERVEIGLDDIIISSSRQMQLLEKAYALVLDLLNKIDRQVSYDMLAFDAYEIINCLGEITGEVSSEDVLDNMFKNFCLGK.

Arg-27, Glu-90, and Lys-129 together coordinate (6S)-5-formyl-5,6,7,8-tetrahydrofolate. A TrmE-type G domain is found at 222-384 (GVTLVLAGSV…LYDKIKTLIS (163 aa)). GTP-binding positions include 232–237 (NAGKSS), 251–257 (SSYPGTT), and 276–279 (DTAG). Mg(2+)-binding residues include Ser-236 and Thr-257. Lys-464 is a binding site for (6S)-5-formyl-5,6,7,8-tetrahydrofolate.

This sequence belongs to the TRAFAC class TrmE-Era-EngA-EngB-Septin-like GTPase superfamily. TrmE GTPase family. Homodimer. Heterotetramer of two MnmE and two MnmG subunits. The cofactor is K(+).

It is found in the cytoplasm. Its function is as follows. Exhibits a very high intrinsic GTPase hydrolysis rate. Involved in the addition of a carboxymethylaminomethyl (cmnm) group at the wobble position (U34) of certain tRNAs, forming tRNA-cmnm(5)s(2)U34. This Borrelia garinii subsp. bavariensis (strain ATCC BAA-2496 / DSM 23469 / PBi) (Borreliella bavariensis) protein is tRNA modification GTPase MnmE.